Consider the following 206-residue polypeptide: Ribosomal RNA large subunit methyltransferase E (206 aa).

The S-adenosyl-L-methionine site is built by G54, W56, D76, D94, and D118. The Proton acceptor role is filled by K158.

This sequence belongs to the class I-like SAM-binding methyltransferase superfamily. RNA methyltransferase RlmE family.

The protein resides in the cytoplasm. It carries out the reaction uridine(2552) in 23S rRNA + S-adenosyl-L-methionine = 2'-O-methyluridine(2552) in 23S rRNA + S-adenosyl-L-homocysteine + H(+). Specifically methylates the uridine in position 2552 of 23S rRNA at the 2'-O position of the ribose in the fully assembled 50S ribosomal subunit. The polypeptide is Ribosomal RNA large subunit methyltransferase E (Methanosphaera stadtmanae (strain ATCC 43021 / DSM 3091 / JCM 11832 / MCB-3)).